The primary structure comprises 216 residues: Pyrophosphatase PpaX (216 aa).

Catalysis depends on Asp-12, which acts as the Nucleophile.

It belongs to the HAD-like hydrolase superfamily. PpaX family. It depends on Mg(2+) as a cofactor.

It carries out the reaction diphosphate + H2O = 2 phosphate + H(+). Functionally, hydrolyzes pyrophosphate formed during P-Ser-HPr dephosphorylation by HPrK/P. Might play a role in controlling the intracellular pyrophosphate pool. In Bacillus velezensis (strain DSM 23117 / BGSC 10A6 / LMG 26770 / FZB42) (Bacillus amyloliquefaciens subsp. plantarum), this protein is Pyrophosphatase PpaX.